Reading from the N-terminus, the 361-residue chain is Replication-associated protein (361 aa).

Positions 1-31 (MSSLPVSESEGEGSGTSVQVPSRGGQVTPGE) are disordered. Positions 35-138 (SLRTKHVFLT…PESSWEFGKF (104 aa)) constitute a CRESS-DNA virus Rep endonuclease domain. The RCR-1 motif lies at 42–45 (FLTY). Residues Glu76, His84, and His86 each contribute to the a divalent metal cation site. An RCR-2 motif is present at residues 84 to 86 (HLH). Tyr124 (for DNA cleavage activity) is an active-site residue. Positions 124-127 (YCMK) match the RCR-3 motif. The segment at 192 to 204 (SANALFPDPPQTY) is oligomerization. Position 243 to 250 (243 to 250 (GPTRTGKT)) interacts with ATP. The transactivation stretch occupies residues 266–285 (VNFLEEWNCQAQFNIIDDIP). Residues 307–317 (KYGKKKRIPNG) carry the Nuclear localization signal motif.

This sequence belongs to the geminiviridae Rep protein family. In terms of assembly, homooligomer. Rep binds to repeated DNA motifs (iterons). Forms the O-complex, which is a Rep-DNA complex involved in the initiation of RCR. Part of the C- and V-complexes which are RepA-Rep-DNA complexes involved in the c-sense and v-sense transcription. It depends on Mg(2+) as a cofactor. Mn(2+) serves as cofactor.

The protein localises to the host nucleus. Essential for the replication of viral ssDNA. The closed circular ssDNA genome is first converted to a superhelical dsDNA. Rep binds a specific region at the genome origin of replication. It introduces an endonucleolytic nick within the conserved sequence 5'-TAATATTAC-3' in the intergenic region of the genome present in all geminiviruses, thereby initiating the rolling circle replication (RCR). Following cleavage, binds covalently to the 5'-phosphate of DNA as a tyrosyl ester. The cleavage gives rise to a free 3'-OH that serves as a primer for the cellular DNA polymerase. The polymerase synthesizes the (+) strand DNA by rolling circle mechanism. After one round of replication, a Rep-catalyzed nucleotidyl transfer reaction releases a circular single-stranded virus genome, thereby terminating the replication. Displays origin-specific DNA cleavage, nucleotidyl transferase, ATPase and helicase activities. Acts as an inhibitor of C-sense gene transcription. The polypeptide is Replication-associated protein (Avena sativa (Oat)).